Reading from the N-terminus, the 321-residue chain is NADH-ubiquinone oxidoreductase chain 1 (321 aa).

8 helical membrane-spanning segments follow: residues 2 to 22, 71 to 91, 104 to 124, 148 to 168, 173 to 193, 224 to 244, 255 to 275, and 295 to 315; these read LVML…VAFL, ALFI…WMFI, LLVI…SGWA, LGLI…QAFI, HTWF…STLA, LFFL…AIMF, ILPI…FLWI, and FLPL…SLGG.

The protein belongs to the complex I subunit 1 family.

It is found in the mitochondrion inner membrane. The catalysed reaction is a ubiquinone + NADH + 5 H(+)(in) = a ubiquinol + NAD(+) + 4 H(+)(out). Functionally, core subunit of the mitochondrial membrane respiratory chain NADH dehydrogenase (Complex I) that is believed to belong to the minimal assembly required for catalysis. Complex I functions in the transfer of electrons from NADH to the respiratory chain. The immediate electron acceptor for the enzyme is believed to be ubiquinone. This Lampetra fluviatilis (European river lamprey) protein is NADH-ubiquinone oxidoreductase chain 1 (MT-ND1).